The sequence spans 177 residues: Adenine phosphoribosyltransferase (177 aa).

The protein belongs to the purine/pyrimidine phosphoribosyltransferase family. Homodimer.

The protein localises to the cytoplasm. The enzyme catalyses AMP + diphosphate = 5-phospho-alpha-D-ribose 1-diphosphate + adenine. It participates in purine metabolism; AMP biosynthesis via salvage pathway; AMP from adenine: step 1/1. In terms of biological role, catalyzes a salvage reaction resulting in the formation of AMP, that is energically less costly than de novo synthesis. This chain is Adenine phosphoribosyltransferase, found in Chlorobium phaeobacteroides (strain BS1).